The chain runs to 528 residues: Probable cyclic di-GMP phosphodiesterase PdeC (528 aa).

2 helical membrane-spanning segments follow: residues 14–34 (GIIF…FLWA) and 242–262 (HLIF…LLWL). Residues 268 to 520 (YLSPKRKLQR…VFMQWMEQLP (253 aa)) enclose the EAL domain.

Its subcellular location is the cell inner membrane. It catalyses the reaction 3',3'-c-di-GMP + H2O = 5'-phosphoguanylyl(3'-&gt;5')guanosine + H(+). Its function is as follows. Phosphodiesterase (PDE) that catalyzes the hydrolysis of cyclic-di-GMP (c-di-GMP) to 5'-pGpG. Cyclic-di-GMP is a second messenger which controls cell surface-associated traits in bacteria. Overexpression reduces biofilm formation. This chain is Probable cyclic di-GMP phosphodiesterase PdeC, found in Escherichia coli (strain K12).